The following is a 160-amino-acid chain: Transcription elongation factor GreA (160 aa).

Positions 8-28 (LTEEGLKQLEAELEHLIQVKR) form a coiled coil.

Belongs to the GreA/GreB family.

Functionally, necessary for efficient RNA polymerase transcription elongation past template-encoded arresting sites. The arresting sites in DNA have the property of trapping a certain fraction of elongating RNA polymerases that pass through, resulting in locked ternary complexes. Cleavage of the nascent transcript by cleavage factors such as GreA or GreB allows the resumption of elongation from the new 3'terminus. GreA releases sequences of 2 to 3 nucleotides. The chain is Transcription elongation factor GreA from Mycoplasma pneumoniae (strain ATCC 29342 / M129 / Subtype 1) (Mycoplasmoides pneumoniae).